Consider the following 396-residue polypeptide: Elongation factor Tu (396 aa).

A tr-type G domain is found at 10-206 (KPHVNVGTIG…ALDTYIPTPE (197 aa)). The segment at 19–26 (GHVDHGKT) is G1. 19 to 26 (GHVDHGKT) contributes to the GTP binding site. Residue Thr26 participates in Mg(2+) binding. The G2 stretch occupies residues 60–64 (GITIN). Residues 81–84 (DCPG) are G3. GTP is bound by residues 81–85 (DCPGH) and 136–139 (NKCD). The interval 136–139 (NKCD) is G4. The interval 174-176 (SAK) is G5.

Belongs to the TRAFAC class translation factor GTPase superfamily. Classic translation factor GTPase family. EF-Tu/EF-1A subfamily. In terms of assembly, monomer.

Its subcellular location is the cytoplasm. The enzyme catalyses GTP + H2O = GDP + phosphate + H(+). In terms of biological role, GTP hydrolase that promotes the GTP-dependent binding of aminoacyl-tRNA to the A-site of ribosomes during protein biosynthesis. The protein is Elongation factor Tu of Burkholderia mallei (strain NCTC 10247).